A 1010-amino-acid polypeptide reads, in one-letter code: MDLNRIIQALKGTIDPKLRIAAETELNQSYKIINFAPSLLRIIVSDHVEFPVRQAAAIYLKNMVTQYWPDREPPPGEVIFPFNIHENDRQQIRDNIVEGIIRSPDLVRVQLTMCLRVIIRHDFPGHWPAVVDKIDYYLQSPNSGSWLGSLLCLYQLVKTYEYKKAEEREPLLAAMQIFLPRIQQQILQLLPDASHYSVLLQKQILKIFYALVQYALPLQLVNHQTMTTWMEIFRTIIDRTVPPETLQIDEDDRPELVWWKCKKWALHIVARLFERYGSPGNVTKEYFEFSEFFLKTYAVGIQQVLLKILDQYRQKEYIAPRVLQQAFNYLNQGVVHAVTWKQMKPHIQNISEDVIFSVMCYKDEDEELWQEDPYEYIRMKFDIFEDYASPTTAAQTLLYTAAKKRKEVLPKMMAFCYQILTDPNFDPRKKDGALHVIGSLAEILLKKSLFKDQIELFLQNHVFPLLMSNLGYLRARSCWVLHAFSSLKFHNELNLRNAVELAKKSLIEDEEMPVKVEAALALQSLISNQAQAKEHMKPYVRFIMQELLHIVRETENDDVTNVIQKLICEYSQDVASIAVDTTQHLAEIFGKVLQSDEYEEIEDKTVMAMGILHTIDTILTVVEDHPEIIQQLENICLRIIDLVLQKHVIEFYEEILSLAYNLTCHTISPQMWQLLGILYEVFQQDCFEYFTDMMPLLHNYVTVDTNALLSNPKHLEVLFTMCRKVLCGEAGEDAECYAAKLLEVIILQCKGRGIDQCIPLFIQLVLERLTRGVKTSELRTMCLQVAIAALYYSPELLFHTLEQVQLPHNPGPVTSQFINQWMNDTDYFLGHHDRKMCIIGLSVLLELQNRPPAVDAVAAQILPSILFLFLGLKQVCATRQTVNRENHSKAEKVDIEENEEISSEEEEETSVSAQAMQSQIGRSEEEDDDDWDEEVLEETALEGFSTPLDLDNSVDEYQFFTQALLTVQNRDAAWYQLLVAPLSEDQKRKLQEVYTLAEHRRTLAAGQFHI.

The Importin N-terminal domain maps to 22-102 (AETELNQSYK…RDNIVEGIIR (81 aa)). Basic and acidic residues predominate over residues 886-895 (NHSKAEKVDI). The segment at 886-932 (NHSKAEKVDIEENEEISSEEEEETSVSAQAMQSQIGRSEEEDDDDWD) is disordered. Positions 896–909 (EENEEISSEEEEET) are enriched in acidic residues. Phosphoserine is present on residues Ser-902 and Ser-903. Polar residues predominate over residues 910–921 (SVSAQAMQSQIG).

It belongs to the importin beta family. Forms a heterodimer with KPNB1. Interacts with SRP19. Interacts with RPL23A. Binds directly to nuclear pore complexes. Interacts with LRPPRC; the interaction occurs when LRPPRC is in its RNA-free form and promotes import of LRPPRC to the nucleus to allow for EIF4E-mediated export of mRNAS from the nucleus to the cytoplasm.

The protein localises to the cytoplasm. Its subcellular location is the nucleus. Functionally, involved in nuclear protein import, either by acting as autonomous nuclear transport receptor or as an adapter-like protein in association with the importin-beta subunit KPNB1. Acting autonomously, may serve as receptor for nuclear localization signals (NLS) and promote translocation of import substrates through the nuclear pore complex (NPC) by an energy requiring, Ran-dependent mechanism. At the nucleoplasmic side of the NPC, Ran binds to importin, the importin/substrate complex dissociates and importin is re-exported from the nucleus to the cytoplasm where GTP hydrolysis releases Ran. The directionality of nuclear import is thought to be conferred by an asymmetric distribution of the GTP- and GDP-bound forms of Ran between the cytoplasm and nucleus. In vitro mediates the nuclear import of the signal recognition particle protein SRP19. May also be involved in cytoplasm-to-nucleus shuttling of a broad spectrum of other cargos, including Argonaute-microRNAs complexes, the JUN protein, RELA/NF-kappa-B p65 subunit, the translation initiation factor EIF4E and a set of receptor-activated mothers against decapentaplegic homolog (SMAD) transcription factors that play a critical role downstream of the large family of transforming growth factor beta and bone morphogenetic protein (BMP) cytokines. In Mus musculus (Mouse), this protein is Importin-8.